A 214-amino-acid chain; its full sequence is Large ribosomal subunit protein uL3 (214 aa).

An N5-methylglutamine modification is found at Gln155.

The protein belongs to the universal ribosomal protein uL3 family. Part of the 50S ribosomal subunit. Forms a cluster with proteins L14 and L19. Post-translationally, methylated by PrmB.

In terms of biological role, one of the primary rRNA binding proteins, it binds directly near the 3'-end of the 23S rRNA, where it nucleates assembly of the 50S subunit. This Acinetobacter baumannii (strain ACICU) protein is Large ribosomal subunit protein uL3.